The following is a 466-amino-acid chain: SVGFKAGVKDYKLTYYTPDYETKDTDILAAFRVTPQPGVPPEEAGAAVAAESSTGTWTTVWTDGLTSLDRYKGRCYGIEPVPGEESQFIAYVAYPLDLFEEGSVTNMFTSIVGNVFGFKALRALRLEDLRIPTAYVKTFQGPPHGIQVERDKLNKYGRPLLGCTIKPKLGLSAKNYGRAVYECLRGGLDFTKDDENVNSQPFMRWRDRFLFCAEALYKAQAETGEIKGHYLNATAGTCEEMMKRAIFARELGVPIVMHDYLTGGFTANTSLAHYCRDNGLLLHIHRAMHAVIDRQKNHGIHFRVLAKALRMSGGDHIHSGTVVGKLEGERDITLGFVDLLRDDFIEKDRSRGIYFTQDWVSLPGVLPVASGGIHVWHMPALTEIFGDDSVLQFGGGTLGHPWGNAPGAVANRVALEACVQARNEGRDLAVEGNEIIREATKWSPELAAACEVWKEIKFEFQAVDTI.

At K5 the chain carries N6,N6,N6-trimethyllysine. Substrate is bound by residues N114 and T164. The Proton acceptor role is filled by K166. K168 provides a ligand contact to substrate. Residues K192, D194, and E195 each coordinate Mg(2+). K192 is modified (N6-carboxylysine). Residue H285 is the Proton acceptor of the active site. R286, H318, and S370 together coordinate substrate.

Belongs to the RuBisCO large chain family. Type I subfamily. In terms of assembly, heterohexadecamer of 8 large chains and 8 small chains; disulfide-linked. The disulfide link is formed within the large subunit homodimers. Requires Mg(2+) as cofactor. In terms of processing, the disulfide bond which can form in the large chain dimeric partners within the hexadecamer appears to be associated with oxidative stress and protein turnover.

The protein resides in the plastid. The protein localises to the chloroplast. The catalysed reaction is 2 (2R)-3-phosphoglycerate + 2 H(+) = D-ribulose 1,5-bisphosphate + CO2 + H2O. The enzyme catalyses D-ribulose 1,5-bisphosphate + O2 = 2-phosphoglycolate + (2R)-3-phosphoglycerate + 2 H(+). Its function is as follows. RuBisCO catalyzes two reactions: the carboxylation of D-ribulose 1,5-bisphosphate, the primary event in carbon dioxide fixation, as well as the oxidative fragmentation of the pentose substrate in the photorespiration process. Both reactions occur simultaneously and in competition at the same active site. The chain is Ribulose bisphosphate carboxylase large chain from Eremothamnus marlothianus.